Reading from the N-terminus, the 298-residue chain is N-acetylmuramic acid 6-phosphate etherase (298 aa).

Residues 55-218 (IHAQVSGGGR…STGLMIKSGK (164 aa)) form the SIS domain. Catalysis depends on Glu83, which acts as the Proton donor. Glu114 is a catalytic residue.

This sequence belongs to the GCKR-like family. MurNAc-6-P etherase subfamily. In terms of assembly, homodimer.

The catalysed reaction is N-acetyl-D-muramate 6-phosphate + H2O = N-acetyl-D-glucosamine 6-phosphate + (R)-lactate. It participates in amino-sugar metabolism; 1,6-anhydro-N-acetylmuramate degradation. The protein operates within amino-sugar metabolism; N-acetylmuramate degradation. It functions in the pathway cell wall biogenesis; peptidoglycan recycling. Its function is as follows. Specifically catalyzes the cleavage of the D-lactyl ether substituent of MurNAc 6-phosphate, producing GlcNAc 6-phosphate and D-lactate. Together with AnmK, is also required for the utilization of anhydro-N-acetylmuramic acid (anhMurNAc) either imported from the medium or derived from its own cell wall murein, and thus plays a role in cell wall recycling. The polypeptide is N-acetylmuramic acid 6-phosphate etherase (Shigella dysenteriae serotype 1 (strain Sd197)).